The chain runs to 342 residues: Dihydroorotase (342 aa).

Residues histidine 13 and histidine 15 each contribute to the Zn(2+) site. Residues 15–17 (HLR) and asparagine 41 contribute to the substrate site. Zn(2+) contacts are provided by lysine 98, histidine 135, and histidine 173. N6-carboxylysine is present on lysine 98. Residue histidine 135 participates in substrate binding. Leucine 218 provides a ligand contact to substrate. Aspartate 246 lines the Zn(2+) pocket. Residue aspartate 246 is part of the active site. Substrate contacts are provided by histidine 250 and alanine 262.

It belongs to the metallo-dependent hydrolases superfamily. DHOase family. Class II DHOase subfamily. In terms of assembly, homodimer. Requires Zn(2+) as cofactor.

The enzyme catalyses (S)-dihydroorotate + H2O = N-carbamoyl-L-aspartate + H(+). Its pathway is pyrimidine metabolism; UMP biosynthesis via de novo pathway; (S)-dihydroorotate from bicarbonate: step 3/3. Functionally, catalyzes the reversible cyclization of carbamoyl aspartate to dihydroorotate. The sequence is that of Dihydroorotase from Aliivibrio salmonicida (strain LFI1238) (Vibrio salmonicida (strain LFI1238)).